A 375-amino-acid polypeptide reads, in one-letter code: MKILVDENMPYAEALFQQLGDVQAVPGRPIPLDALAGADALMVRSVTKVNEALLQGTSIRFVGTATAGTDHVDDNWLQQQGIGFSAAPGCNAIAVVEYVFSALMMMAERDGFQLRDKTVGIIGVGNVGSRLNARLQALGVRTLLCDPPRADRGDNERFWPLEKLVREADVLTFHTPLNKNGPYQSLHMADDELLAALPDGRILINACRGAVVDNTALLRALEKGKKLSVVLDVWEPEPELSLPLLARVDIGTPHIAGYTLEGKARGTTQVFEAFSQYLGQPQSVELASLLPQPEFSQLRLNGELDEGKLKRLMHLVYDVRRDDAPLRRVADQSGEFDRLRKHYQERREWSSLCVQCDDAASAELLQKLGFSTQLL.

Residues S45 and T66 each coordinate substrate. NAD(+) is bound by residues D146 and T175. R208 is a catalytic residue. D232 is a binding site for NAD(+). E237 is a catalytic residue. H254 serves as the catalytic Proton donor. G257 provides a ligand contact to NAD(+). Residue Y258 coordinates substrate.

This sequence belongs to the D-isomer specific 2-hydroxyacid dehydrogenase family. PdxB subfamily. In terms of assembly, homodimer.

Its subcellular location is the cytoplasm. The enzyme catalyses 4-phospho-D-erythronate + NAD(+) = (R)-3-hydroxy-2-oxo-4-phosphooxybutanoate + NADH + H(+). Its pathway is cofactor biosynthesis; pyridoxine 5'-phosphate biosynthesis; pyridoxine 5'-phosphate from D-erythrose 4-phosphate: step 2/5. Catalyzes the oxidation of erythronate-4-phosphate to 3-hydroxy-2-oxo-4-phosphonooxybutanoate. The sequence is that of Erythronate-4-phosphate dehydrogenase from Yersinia enterocolitica serotype O:8 / biotype 1B (strain NCTC 13174 / 8081).